We begin with the raw amino-acid sequence, 149 residues long: Transcriptional repressor NrdR (149 aa).

A zinc finger spans residues 3–34 (CPFCAAEETKVVDSRLAADGYQIRRRRECTSC). One can recognise an ATP-cone domain in the interval 49–139 (PYVIKNNGNR…VYLSFDDIEE (91 aa)).

The protein belongs to the NrdR family. Zn(2+) serves as cofactor.

Negatively regulates transcription of bacterial ribonucleotide reductase nrd genes and operons by binding to NrdR-boxes. The polypeptide is Transcriptional repressor NrdR (Actinobacillus pleuropneumoniae serotype 3 (strain JL03)).